We begin with the raw amino-acid sequence, 435 residues long: Tol-Pal system protein TolB (435 aa).

A signal peptide spans 1 to 28; that stretch reads MTKCSFFRAILVAVGLMTAAVFATPANA. A disordered region spans residues 288–310; sequence STAAIDTSPSYSPDGARVSFESD.

The protein belongs to the TolB family. As to quaternary structure, the Tol-Pal system is composed of five core proteins: the inner membrane proteins TolA, TolQ and TolR, the periplasmic protein TolB and the outer membrane protein Pal. They form a network linking the inner and outer membranes and the peptidoglycan layer.

The protein localises to the periplasm. Part of the Tol-Pal system, which plays a role in outer membrane invagination during cell division and is important for maintaining outer membrane integrity. The polypeptide is Tol-Pal system protein TolB (Rhizobium johnstonii (strain DSM 114642 / LMG 32736 / 3841) (Rhizobium leguminosarum bv. viciae)).